The following is a 102-amino-acid chain: MDKTKRPLRKSKRSFRRRLPPPIGSGDRIDYRNMSLISRFISEQGKILSRRVNRLTLKQQRLITIAIKQARILSSLPFLNNEKQFERPESIPKTAGPSIRNK.

Over residues 1 to 19 (MDKTKRPLRKSKRSFRRRL) the composition is skewed to basic residues. The tract at residues 1–26 (MDKTKRPLRKSKRSFRRRLPPPIGSG) is disordered.

This sequence belongs to the bacterial ribosomal protein bS18 family. In terms of assembly, part of the 30S ribosomal subunit.

It is found in the plastid. The protein localises to the chloroplast. The protein is Small ribosomal subunit protein bS18c of Piper cenocladum (Ant piper).